Here is a 205-residue protein sequence, read N- to C-terminus: Small ribosomal subunit protein uS4 (205 aa).

Residues 1–16 are compositionally biased toward basic and acidic residues; sequence MSKRETTKYKIDRRMG. Positions 1–46 are disordered; that stretch reads MSKRETTKYKIDRRMGENIWGRPKSPVNRRDYGPGQHGQRRKGKLS. The region spanning 94–157 is the S4 RNA-binding domain; it reads SRLDAVVYRA…KQLVLVLESV (64 aa).

Belongs to the universal ribosomal protein uS4 family. Part of the 30S ribosomal subunit. Contacts protein S5. The interaction surface between S4 and S5 is involved in control of translational fidelity.

Its function is as follows. One of the primary rRNA binding proteins, it binds directly to 16S rRNA where it nucleates assembly of the body of the 30S subunit. Functionally, with S5 and S12 plays an important role in translational accuracy. The chain is Small ribosomal subunit protein uS4 from Bartonella tribocorum (strain CIP 105476 / IBS 506).